Reading from the N-terminus, the 100-residue chain is uncharacterized protein (100 aa).

Transmembrane regions (helical) follow at residues 30 to 50 (FHIPDFLSFVFPFVASPPLAF) and 69 to 89 (FLLIVFLFFNLFPTFFFLPFF).

It localises to the cytoplasm. The protein resides in the nucleus membrane. This is an uncharacterized protein from Schizosaccharomyces pombe (strain 972 / ATCC 24843) (Fission yeast).